The chain runs to 333 residues: S-adenosylmethionine-dependent nucleotide dehydratase (333 aa).

The region spanning 1 to 239 (MNIKTIVINW…SAPQKQNNVI (239 aa)) is the Radical SAM core domain. Cys-16, Cys-20, and Cys-23 together coordinate [4Fe-4S] cluster.

The protein belongs to the radical SAM superfamily. Viperin family. It depends on [4Fe-4S] cluster as a cofactor.

It carries out the reaction GTP + AH2 + S-adenosyl-L-methionine = 3'-deoxy-3',4'-didehydro-GTP + 5'-deoxyadenosine + L-methionine + A + H2O + H(+). In terms of biological role, expression of pVip56 in E.coli (strain MG1655) confers resistance to phage P1; has no effect against T7. Catalyzes the conversion of guanosine triphosphate (GTP) to 3'-deoxy-3',4'-didehydro-GTP (ddhGTP), probably via a SAM-dependent radical mechanism. The modified nucleotide represses transcription from T7 RNA polymerase-directed genes (possibly by acting as chain terminators), strongly suggesting these nucleotides block viral polymerase transcription. How this protein allows bacteria to resist viruses that do not encode their own RNA polymerase (such as lambda, P1) is unknown. This is S-adenosylmethionine-dependent nucleotide dehydratase from Fibrobacter sp. (strain UWH6).